The primary structure comprises 533 residues: CTP synthase (533 aa).

The amidoligase domain stretch occupies residues 1–269; sequence MKKNLKILVI…HEILSSKLNI (269 aa). CTP is bound at residue Ser16. Ser16 serves as a coordination point for UTP. Residues 17–22 and Asp73 contribute to the ATP site; that span reads GIGKGV. The Mg(2+) site is built by Asp73 and Glu143. Residues 150–152, 190–195, and Lys226 each bind CTP; these read DME and KSKPTQ. Residues 190 to 195 and Lys226 each bind UTP; that span reads KSKPTQ. The Glutamine amidotransferase type-1 domain occupies 304 to 533; it reads YAELDDSYAS…LFLGLIKACI (230 aa). L-glutamine is bound at residue Gly355. Cys382 serves as the catalytic Nucleophile; for glutamine hydrolysis. L-glutamine is bound by residues 383–386, Glu406, and Arg466; that span reads LGLQ. Catalysis depends on residues His511 and Glu513.

The protein belongs to the CTP synthase family. Homotetramer.

It carries out the reaction UTP + L-glutamine + ATP + H2O = CTP + L-glutamate + ADP + phosphate + 2 H(+). The catalysed reaction is L-glutamine + H2O = L-glutamate + NH4(+). It catalyses the reaction UTP + NH4(+) + ATP = CTP + ADP + phosphate + 2 H(+). It functions in the pathway pyrimidine metabolism; CTP biosynthesis via de novo pathway; CTP from UDP: step 2/2. Allosterically activated by GTP, when glutamine is the substrate; GTP has no effect on the reaction when ammonia is the substrate. The allosteric effector GTP functions by stabilizing the protein conformation that binds the tetrahedral intermediate(s) formed during glutamine hydrolysis. Inhibited by the product CTP, via allosteric rather than competitive inhibition. In terms of biological role, catalyzes the ATP-dependent amination of UTP to CTP with either L-glutamine or ammonia as the source of nitrogen. Regulates intracellular CTP levels through interactions with the four ribonucleotide triphosphates. The sequence is that of CTP synthase from Borreliella afzelii (strain PKo) (Borrelia afzelii).